Reading from the N-terminus, the 1416-residue chain is Uveal autoantigen with coiled-coil domains and ankyrin repeats (1416 aa).

Position 1 is an N-acetylmethionine (Met1). Residues 1–24 (MKSLKSRLRRQDVPGPASSGAAAA) are disordered. 6 ANK repeats span residues 38 to 66 (LMKAAERGDVEKVTSILAKKGVNPGKLDV), 67 to 96 (EGRSVFHVVTSKGNLECLNAILIHGVDITT), 100 to 129 (AGRNALHLAAKYGHALCLQKLLQYNCPTEH), 133 to 162 (QGRTALHDAAMADCPSSIQLLCDHGASVNA), 166 to 195 (DGRTPLVLATQMSRPTICQLLIDRGADVNS), and 199 to 228 (QNRTALMLGCEYGCRDAVEVLIKNGADISL). 2 coiled-coil regions span residues 286–374 (VKSH…NRFK) and 438–1386 (ENEI…IYRT). A Glycyl lysine isopeptide (Lys-Gly) (interchain with G-Cter in SUMO2) cross-link involves residue Lys1035.

As to quaternary structure, component of the apoptosome complex, composed of APAF1, pro-caspase-9 and UACA. In the complex, it probably interacts directly with APAF1. Interacts with LGALS3, ARF6 and ACTB. Interacts with RAB39A. As to expression, highly expressed in skeletal muscle, heart, kidney and pancreas. Expressed in choroid, retina and epidermal melanocytes. Expressed in eye muscles and thyroid follicular cells.

Its subcellular location is the nucleus. It localises to the cytoplasm. The protein resides in the cytoskeleton. Regulates APAF1 expression and plays an important role in the regulation of stress-induced apoptosis. Promotes apoptosis by regulating three pathways, apoptosome up-regulation, LGALS3/galectin-3 down-regulation and NF-kappa-B inactivation. Regulates the redistribution of APAF1 into the nucleus after proapoptotic stress. Down-regulates the expression of LGALS3 by inhibiting NFKB1. In terms of biological role, modulates isoactin dynamics to regulate the morphological alterations required for cell growth and motility. Interaction with ARF6 may modulate cell shape and motility after injury. May be involved in multiple neurite formation. The protein is Uveal autoantigen with coiled-coil domains and ankyrin repeats (UACA) of Homo sapiens (Human).